The primary structure comprises 367 residues: Alpha-2-HS-glycoprotein (367 aa).

The N-terminal stretch at 1–18 (MKSLVLLLCLAQLWGCHS) is a signal peptide. The Cystatin fetuin-A-type 1 domain occupies 27–133 (YRQPNCDDPE…KFSVVYAKCD (107 aa)). 6 disulfide bridges follow: C32/C358, C89/C100, C114/C132, C146/C149, C208/C219, and C230/C247. S134 carries the phosphoserine modification. S135 and S138 each carry phosphoserine; by FAM20C. The region spanning 144 to 255 (KVCQDCPLLA…TCMVFQTQPV (112 aa)) is the Cystatin fetuin-A-type 2 domain. N-linked (GlcNAc...) (complex) asparagine glycosylation is found at N156 and N176. Residues 255–298 (VSSQPQPEGANEAVPTPVVDPDAPPSPPLGAPGLPPAGSPPDSH) are disordered. An O-linked (GalNAc...) threonine glycan is attached at T270. A compositionally biased stretch (pro residues) spans 276 to 293 (DAPPSPPLGAPGLPPAGS). 2 O-linked (GalNAc...) serine glycosylation sites follow: S280 and S293. Positions 301 to 340 (LAAPPGHQLHRAHYDLRHTFMGVVSLGSPSGEVSHPRKTR) are cleaved as a propeptide — connecting peptide. At T319 the chain carries Phosphothreonine; by FAM20C. S325, S328, and S330 each carry phosphoserine; by FAM20C. Residues T339 and T341 are each glycosylated (O-linked (GalNAc...) threonine). Residue S346 is glycosylated (O-linked (GalNAc...) serine).

Belongs to the fetuin family. Alpha-2-HS glycoprotein derives from this precursor, when the connecting peptide is cleaved off. The two chains A and B are held together by a single disulfide bond. In terms of processing, phosphorylated by FAM20C in the extracellular medium. Post-translationally, O- and N-glycosylated. O-glycosylated with core 1 or possibly core 8 glycans. N-glycan at Asn-156: Hex5HexNAc4; N-glycan heterogeneity at Asn-176: Hex5HexNAc4 (major) and Hex6HexNAc5 (minor). Synthesized in liver and selectively concentrated in bone matrix. Secreted in plasma. It is also found in dentin in much higher quantities than other plasma proteins.

It is found in the secreted. Its function is as follows. Promotes endocytosis, possesses opsonic properties and influences the mineral phase of bone. Shows affinity for calcium and barium ions. In Homo sapiens (Human), this protein is Alpha-2-HS-glycoprotein (AHSG).